Consider the following 149-residue polypeptide: Large ribosomal subunit protein uL15 (149 aa).

Basic residues-rich tracts occupy residues 1–14 (MPTHLSKTRKHRGH) and 21–30 (RVGKHRKHPG). Residues 1–42 (MPTHLSKTRKHRGHVSAGHGRVGKHRKHPGGRGLAGGQHHHR) are disordered.

The protein belongs to the universal ribosomal protein uL15 family.

In Blumeria hordei (Barley powdery mildew), this protein is Large ribosomal subunit protein uL15.